The following is a 759-amino-acid chain: 1,4-alpha-glucan branching enzyme GlgB (759 aa).

The segment at 1 to 22 (MAKTKGLPKDTAVTPSPHLRPH) is disordered. The Nucleophile role is filled by Asp-422. The Proton donor role is filled by Glu-475.

Belongs to the glycosyl hydrolase 13 family. GlgB subfamily. In terms of assembly, monomer.

It catalyses the reaction Transfers a segment of a (1-&gt;4)-alpha-D-glucan chain to a primary hydroxy group in a similar glucan chain.. The protein operates within glycan biosynthesis; glycogen biosynthesis. Its function is as follows. Catalyzes the formation of the alpha-1,6-glucosidic linkages in glycogen by scission of a 1,4-alpha-linked oligosaccharide from growing alpha-1,4-glucan chains and the subsequent attachment of the oligosaccharide to the alpha-1,6 position. This Mycobacterium sp. (strain KMS) protein is 1,4-alpha-glucan branching enzyme GlgB.